Here is a 216-residue protein sequence, read N- to C-terminus: Adenylate kinase (216 aa).

10 to 15 (GAGKGT) contributes to the ATP binding site. The tract at residues 30 to 59 (STGDMFRAAMKAETELGLQAKSFIDKGALV) is NMP. Residues Thr31, Arg36, 57–59 (ALV), 85–88 (GFPR), and Gln92 each bind AMP. Positions 126-163 (GRRICKECGATYHLEFNPPAKADVCDKCGGELYQRSDD) are LID. Arg127 is an ATP binding site. Zn(2+)-binding residues include Cys130 and Cys133. 136-137 (TY) serves as a coordination point for ATP. Zn(2+) is bound by residues Cys150 and Cys153. The AMP site is built by Arg160 and Arg171. Residue Gln199 participates in ATP binding.

The protein belongs to the adenylate kinase family. As to quaternary structure, monomer.

It is found in the cytoplasm. It carries out the reaction AMP + ATP = 2 ADP. It functions in the pathway purine metabolism; AMP biosynthesis via salvage pathway; AMP from ADP: step 1/1. Catalyzes the reversible transfer of the terminal phosphate group between ATP and AMP. Plays an important role in cellular energy homeostasis and in adenine nucleotide metabolism. The chain is Adenylate kinase from Bacillus mycoides (strain KBAB4) (Bacillus weihenstephanensis).